The chain runs to 135 residues: Fluoride-specific ion channel FluC (135 aa).

Helical transmembrane passes span 7 to 27 (IAAISLGASLGALARYGLGLA), 37 to 57 (IGTLAANLIAAYVVGVTIAYV), 70 to 90 (FMITGLAGGLSTFSTFTAELF), and 105 to 125 (LGLHVGGSLALLMLGMLTIGL). Na(+) contacts are provided by glycine 77 and serine 80.

This sequence belongs to the fluoride channel Fluc/FEX (TC 1.A.43) family.

The protein localises to the cell inner membrane. The enzyme catalyses fluoride(in) = fluoride(out). With respect to regulation, na(+) is not transported, but it plays an essential structural role and its presence is essential for fluoride channel function. In terms of biological role, fluoride-specific ion channel. Important for reducing fluoride concentration in the cell, thus reducing its toxicity. This is Fluoride-specific ion channel FluC from Xanthomonas oryzae pv. oryzae (strain MAFF 311018).